A 132-amino-acid chain; its full sequence is uncharacterized protein (132 aa).

WD repeat units follow at residues Asp-14–Leu-53 and Ala-58–Val-97.

This is an uncharacterized protein from Acanthamoeba polyphaga (Amoeba).